The primary structure comprises 408 residues: Menaquinone reductase (408 aa).

FAD contacts are provided by residues G13–A17, C46–G49, R103, A127, D290, and G302–I303.

Belongs to the geranylgeranyl reductase family. FAD is required as a cofactor.

It catalyses the reaction menaquinone-9 + AH2 = beta-dihydromenaquinone-9 + A. Its pathway is quinol/quinone metabolism; menaquinone biosynthesis. In terms of biological role, catalyzes the reduction of a single double bond in the isoprenoid tail of menaquinone (MK-9) in M.tuberculosis, likely the beta-isoprene unit, forming the predominant form of menaquinone found in mycobacteria, MK-9(II-H2). This is Menaquinone reductase from Mycobacterium tuberculosis (strain CDC 1551 / Oshkosh).